Here is a 377-residue protein sequence, read N- to C-terminus: L-arabinitol 4-dehydrogenase (377 aa).

Positions 66, 91, 92, 121, 124, 127, 135, and 176 each coordinate Zn(2+). NAD(+) contacts are provided by residues 203–204 (PI), Asp-224, Arg-229, Ile-296, and 320–322 (QYR).

Belongs to the zinc-containing alcohol dehydrogenase family. Homotetramer. It depends on Zn(2+) as a cofactor. In terms of processing, the N-terminus is blocked.

It catalyses the reaction L-arabinitol + NAD(+) = L-xylulose + NADH + H(+). It participates in carbohydrate degradation; L-arabinose degradation via L-arabinitol; D-xylulose 5-phosphate from L-arabinose (fungal route): step 2/5. Catalyzes the NAD-dependent oxidation of L-arabinitol to L-xylulose in the fungal L-arabinose catabolic pathway. L-arabinose catabolism is important for using plant material as a carbon source. Can partially compensate for xylitol dehydrogenase in xdh1 mutants. Also oxidizes galactitol to L-xylo-3-hexulose as an alternative to the standard Leloir pathway for D-galactose metabolism. NADP cannot act as a cosubstrate. This is L-arabinitol 4-dehydrogenase (lad1) from Hypocrea jecorina (Trichoderma reesei).